Reading from the N-terminus, the 313-residue chain is Small ribosomal subunit biogenesis GTPase RsgA (313 aa).

Positions 80–237 constitute a CP-type G domain; that stretch reads KVALRQVIVS…LIDTPGIKEF (158 aa). Residues 129 to 132 and 180 to 188 each bind GTP; these read NKVD and GQSGVGKSS. Zn(2+) contacts are provided by Cys-261, Cys-266, His-268, and Cys-274.

Belongs to the TRAFAC class YlqF/YawG GTPase family. RsgA subfamily. In terms of assembly, monomer. Associates with 30S ribosomal subunit, binds 16S rRNA. Requires Zn(2+) as cofactor.

It is found in the cytoplasm. Functionally, one of several proteins that assist in the late maturation steps of the functional core of the 30S ribosomal subunit. Helps release RbfA from mature subunits. May play a role in the assembly of ribosomal proteins into the subunit. Circularly permuted GTPase that catalyzes slow GTP hydrolysis, GTPase activity is stimulated by the 30S ribosomal subunit. This chain is Small ribosomal subunit biogenesis GTPase RsgA, found in Borrelia recurrentis (strain A1).